The chain runs to 157 residues: Small ribosomal subunit protein uS7 (157 aa).

It belongs to the universal ribosomal protein uS7 family. As to quaternary structure, part of the 30S ribosomal subunit. Contacts proteins S9 and S11.

In terms of biological role, one of the primary rRNA binding proteins, it binds directly to 16S rRNA where it nucleates assembly of the head domain of the 30S subunit. Is located at the subunit interface close to the decoding center, probably blocks exit of the E-site tRNA. The sequence is that of Small ribosomal subunit protein uS7 from Eikenella corrodens.